Consider the following 179-residue polypeptide: Transcription factor 21 (179 aa).

The interval 20-87 (CDGLKMDSNK…QVQRNAANAR (68 aa)) is disordered. Low complexity predominate over residues 33–46 (TSNESTEESSNCEN). Over residues 70–80 (SGVSQEGKQVQ) the composition is skewed to polar residues. The bHLH domain maps to 79–131 (VQRNAANARERARMRVLSKAFSRLKTTLPWVPPDTKLSKLDTLRLASSYIAHL).

Efficient DNA binding requires dimerization with another bHLH protein. Forms a heterodimer with TCF3 and binds the E box (5'-CANNTG-3').

The protein resides in the nucleus. Functionally, involved in epithelial-mesenchymal interactions in kidney and lung morphogenesis that include epithelial differentiation and branching morphogenesis. May play a role in the specification or differentiation of one or more subsets of epicardial cell types. In Homo sapiens (Human), this protein is Transcription factor 21 (TCF21).